A 397-amino-acid polypeptide reads, in one-letter code: Homocysteine-responsive endoplasmic reticulum-resident ubiquitin-like domain member 2 protein (397 aa).

The region spanning 10–89 (VTLVIKAPNQ…HMVHLVCASR (80 aa)) is the Ubiquitin-like domain. 2 disordered regions span residues 87 to 166 (ASRS…MQGG) and 210 to 246 (APSPSLSAGPATQPVQPNEPAAPMGPNPAPEDRPANP). Low complexity-rich tracts occupy residues 88–123 (SRSPPSSPTSDSHFSTTDSSSSTSDSAGPSLSSTPS) and 210–220 (APSPSLSAGPA). Residues 293–313 (FVMVIGAMLLVYLHQAGWFPF) form a helical membrane-spanning segment. A disordered region spans residues 344–373 (DEGIEDDEGDSGEEGPDDPMNPGPHQPGFL). The segment covering 345 to 360 (EGIEDDEGDSGEEGPD) has biased composition (acidic residues).

It is found in the membrane. Could be involved in the unfolded protein response (UPR) pathway. The protein is Homocysteine-responsive endoplasmic reticulum-resident ubiquitin-like domain member 2 protein (herpud2) of Danio rerio (Zebrafish).